A 428-amino-acid polypeptide reads, in one-letter code: Aerobic C4-dicarboxylate transport protein (428 aa).

Helical transmembrane passes span 5-27 (LFKS…GHFY), 47-64 (MIIA…IAGM), 77-99 (ALLY…VNVV), 141-163 (VIGA…FGFA), 184-206 (VIFG…AMAF), 219-241 (LGQL…LGSI), 326-348 (IVHQ…GVTG), and 352-374 (IVLA…LILG).

The protein belongs to the dicarboxylate/amino acid:cation symporter (DAACS) (TC 2.A.23) family.

It localises to the cell inner membrane. In terms of biological role, responsible for the aerobic transport of the dicarboxylates fumarate and malate and to a lesser extent succinate, from the periplasm across the inner membrane. The chain is Aerobic C4-dicarboxylate transport protein from Escherichia coli O157:H7.